The chain runs to 250 residues: tRNA (guanine-N(1)-)-methyltransferase (250 aa).

S-adenosyl-L-methionine contacts are provided by residues Gly-116 and Ile-136–Leu-141.

It belongs to the RNA methyltransferase TrmD family. In terms of assembly, homodimer.

It localises to the cytoplasm. It catalyses the reaction guanosine(37) in tRNA + S-adenosyl-L-methionine = N(1)-methylguanosine(37) in tRNA + S-adenosyl-L-homocysteine + H(+). Its function is as follows. Specifically methylates guanosine-37 in various tRNAs. The sequence is that of tRNA (guanine-N(1)-)-methyltransferase from Stutzerimonas stutzeri (strain A1501) (Pseudomonas stutzeri).